Reading from the N-terminus, the 881-residue chain is Alanine--tRNA ligase (881 aa).

H568, H572, C670, and H674 together coordinate Zn(2+).

This sequence belongs to the class-II aminoacyl-tRNA synthetase family. Zn(2+) is required as a cofactor.

It is found in the cytoplasm. It catalyses the reaction tRNA(Ala) + L-alanine + ATP = L-alanyl-tRNA(Ala) + AMP + diphosphate. Catalyzes the attachment of alanine to tRNA(Ala) in a two-step reaction: alanine is first activated by ATP to form Ala-AMP and then transferred to the acceptor end of tRNA(Ala). Also edits incorrectly charged Ser-tRNA(Ala) and Gly-tRNA(Ala) via its editing domain. The protein is Alanine--tRNA ligase of Moorella thermoacetica (strain ATCC 39073 / JCM 9320).